The sequence spans 259 residues: Deoxyribose-phosphate aldolase (259 aa).

The Proton donor/acceptor role is filled by D102. K167 (schiff-base intermediate with acetaldehyde) is an active-site residue. K201 functions as the Proton donor/acceptor in the catalytic mechanism.

The protein belongs to the DeoC/FbaB aldolase family. DeoC type 2 subfamily.

Its subcellular location is the cytoplasm. It carries out the reaction 2-deoxy-D-ribose 5-phosphate = D-glyceraldehyde 3-phosphate + acetaldehyde. It functions in the pathway carbohydrate degradation; 2-deoxy-D-ribose 1-phosphate degradation; D-glyceraldehyde 3-phosphate and acetaldehyde from 2-deoxy-alpha-D-ribose 1-phosphate: step 2/2. Functionally, catalyzes a reversible aldol reaction between acetaldehyde and D-glyceraldehyde 3-phosphate to generate 2-deoxy-D-ribose 5-phosphate. This is Deoxyribose-phosphate aldolase from Salmonella dublin (strain CT_02021853).